The following is a 662-amino-acid chain: MNQFKVISKFNPTGDQPKAIKSIAKGIEKREKFQTLIGVTGSGKTFTMANIIEKVQKPTLVLAHNKTLAAQLCSEFREFFPNNAVEYFVSYYDYYQPEAYVAQSDTYIEKDASINDEIDKLRHSATSALFERKDVIIVASVSCIYGLGNPEEYKKLTISLREGMEKDRDEIIKKLVEIQYERNDIDFSRGTFRVKGDVLDIFPASSSSKAVRVEFFGDEIDRIKEFDVLTGETITKLKHISIFPASHFATSKDRLEVAIKDIEEELEERVKELVSQDKILEAQRLKQRTNFDIEMMREVGYCTGIENYSRVLDGRAKGTPPQTLLDYFPQDFLLFIDESHVTLPQVKAMQAGDKSRKDSLVEYGFRLPCAYDNRPLTFKEFENKLNQVVFVSATPAKYELEYSTNTAEQVIRPTGLLDPEIIVKPVKGQIDDLYTSIQETIKRGFRILVTTLTKKMAEDLTDYLKEMGVKTRYLHSDIDTIERMKIIHDLRKGEFHVLVGINLLREGLDIPEVALVTILDADKEGFLRSETSLIQTVGRAARNSESKVIMYGDVITKSMEKTIKETNRRRKIQMEYNEEYGIVPKTIIKDIREVIQISDIAEERKEYDNLNEALKSYNNDIDKLIEKYEEEMKEAAQNLQFEKAAHLRDVIYKLKKDKETEL.

The region spanning 25 to 182 is the Helicase ATP-binding domain; the sequence is KGIEKREKFQ…KKLVEIQYER (158 aa). 38–45 provides a ligand contact to ATP; the sequence is GVTGSGKT. Positions 91–114 match the Beta-hairpin motif; the sequence is YYDYYQPEAYVAQSDTYIEKDASI. The Helicase C-terminal domain maps to 429-595; it reads QIDDLYTSIQ…TIIKDIREVI (167 aa). Residues 622 to 657 enclose the UVR domain; sequence DKLIEKYEEEMKEAAQNLQFEKAAHLRDVIYKLKKD.

It belongs to the UvrB family. In terms of assembly, forms a heterotetramer with UvrA during the search for lesions. Interacts with UvrC in an incision complex.

The protein resides in the cytoplasm. The UvrABC repair system catalyzes the recognition and processing of DNA lesions. A damage recognition complex composed of 2 UvrA and 2 UvrB subunits scans DNA for abnormalities. Upon binding of the UvrA(2)B(2) complex to a putative damaged site, the DNA wraps around one UvrB monomer. DNA wrap is dependent on ATP binding by UvrB and probably causes local melting of the DNA helix, facilitating insertion of UvrB beta-hairpin between the DNA strands. Then UvrB probes one DNA strand for the presence of a lesion. If a lesion is found the UvrA subunits dissociate and the UvrB-DNA preincision complex is formed. This complex is subsequently bound by UvrC and the second UvrB is released. If no lesion is found, the DNA wraps around the other UvrB subunit that will check the other stand for damage. The polypeptide is UvrABC system protein B (Clostridium botulinum (strain Kyoto / Type A2)).